The following is a 414-amino-acid chain: Gamma-glutamyl phosphate reductase (414 aa).

It belongs to the gamma-glutamyl phosphate reductase family.

It localises to the cytoplasm. The catalysed reaction is L-glutamate 5-semialdehyde + phosphate + NADP(+) = L-glutamyl 5-phosphate + NADPH + H(+). It participates in amino-acid biosynthesis; L-proline biosynthesis; L-glutamate 5-semialdehyde from L-glutamate: step 2/2. Its function is as follows. Catalyzes the NADPH-dependent reduction of L-glutamate 5-phosphate into L-glutamate 5-semialdehyde and phosphate. The product spontaneously undergoes cyclization to form 1-pyrroline-5-carboxylate. The polypeptide is Gamma-glutamyl phosphate reductase (Geobacillus thermodenitrificans (strain NG80-2)).